The primary structure comprises 202 residues: Myosin regulatory light chain 10 (202 aa).

Residues methionine 1–glycine 21 are disordered. 3 consecutive EF-hand domains span residues serine 60–isoleucine 95, aspartate 130–arginine 165, and phenylalanine 166–lysine 201. Ca(2+) contacts are provided by aspartate 73, asparagine 75, aspartate 77, and aspartate 84.

As to quaternary structure, myosin is a hexamer of 2 heavy chains and 4 light chains. In terms of tissue distribution, specifically expressed in precursor B- and T-lymphocytes.

The sequence is that of Myosin regulatory light chain 10 (Myl10) from Mus musculus (Mouse).